The chain runs to 211 residues: LexA repressor (211 aa).

The segment at residues glutamine 27–aspartate 47 is a DNA-binding region (H-T-H motif). Catalysis depends on for autocatalytic cleavage activity residues serine 131 and lysine 168.

It belongs to the peptidase S24 family. As to quaternary structure, homodimer.

It catalyses the reaction Hydrolysis of Ala-|-Gly bond in repressor LexA.. Functionally, represses a number of genes involved in the response to DNA damage (SOS response), including recA and lexA. In the presence of single-stranded DNA, RecA interacts with LexA causing an autocatalytic cleavage which disrupts the DNA-binding part of LexA, leading to derepression of the SOS regulon and eventually DNA repair. The polypeptide is LexA repressor (Xylella fastidiosa (strain M23)).